We begin with the raw amino-acid sequence, 267 residues long: GTP cyclohydrolase FolE2 (267 aa).

It belongs to the GTP cyclohydrolase IV family.

It carries out the reaction GTP + H2O = 7,8-dihydroneopterin 3'-triphosphate + formate + H(+). The protein operates within cofactor biosynthesis; 7,8-dihydroneopterin triphosphate biosynthesis; 7,8-dihydroneopterin triphosphate from GTP: step 1/1. Functionally, converts GTP to 7,8-dihydroneopterin triphosphate. The polypeptide is GTP cyclohydrolase FolE2 (Citrifermentans bemidjiense (strain ATCC BAA-1014 / DSM 16622 / JCM 12645 / Bem) (Geobacter bemidjiensis)).